Consider the following 178-residue polypeptide: Large ribosomal subunit protein uL16 (178 aa).

Belongs to the universal ribosomal protein uL16 family.

The sequence is that of Large ribosomal subunit protein uL16 from Saccharolobus islandicus (strain Y.N.15.51 / Yellowstone #2) (Sulfolobus islandicus).